A 480-amino-acid polypeptide reads, in one-letter code: Cysteine--tRNA ligase (480 aa).

Cys27 contacts Zn(2+). The 'HIGH' region signature appears at 29–39; the sequence is PTVYNYAHIGN. Zn(2+) contacts are provided by Cys221, His246, and Glu250. The short motif at 278–282 is the 'KMSKS' region element; sequence KMSKS. Lys281 is an ATP binding site.

It belongs to the class-I aminoacyl-tRNA synthetase family. Monomer. Zn(2+) is required as a cofactor.

The protein localises to the cytoplasm. It carries out the reaction tRNA(Cys) + L-cysteine + ATP = L-cysteinyl-tRNA(Cys) + AMP + diphosphate. This is Cysteine--tRNA ligase from Borrelia garinii subsp. bavariensis (strain ATCC BAA-2496 / DSM 23469 / PBi) (Borreliella bavariensis).